A 222-amino-acid chain; its full sequence is Phosphoribosylformylglycinamidine synthase subunit PurQ (222 aa).

The region spanning 3–222 (AAVVVFPGSN…RALSGLLTDA (220 aa)) is the Glutamine amidotransferase type-1 domain. Cys-86 acts as the Nucleophile in catalysis. Catalysis depends on residues His-194 and Glu-196.

Part of the FGAM synthase complex composed of 1 PurL, 1 PurQ and 2 PurS subunits.

The protein resides in the cytoplasm. The catalysed reaction is N(2)-formyl-N(1)-(5-phospho-beta-D-ribosyl)glycinamide + L-glutamine + ATP + H2O = 2-formamido-N(1)-(5-O-phospho-beta-D-ribosyl)acetamidine + L-glutamate + ADP + phosphate + H(+). It catalyses the reaction L-glutamine + H2O = L-glutamate + NH4(+). It functions in the pathway purine metabolism; IMP biosynthesis via de novo pathway; 5-amino-1-(5-phospho-D-ribosyl)imidazole from N(2)-formyl-N(1)-(5-phospho-D-ribosyl)glycinamide: step 1/2. Functionally, part of the phosphoribosylformylglycinamidine synthase complex involved in the purines biosynthetic pathway. Catalyzes the ATP-dependent conversion of formylglycinamide ribonucleotide (FGAR) and glutamine to yield formylglycinamidine ribonucleotide (FGAM) and glutamate. The FGAM synthase complex is composed of three subunits. PurQ produces an ammonia molecule by converting glutamine to glutamate. PurL transfers the ammonia molecule to FGAR to form FGAM in an ATP-dependent manner. PurS interacts with PurQ and PurL and is thought to assist in the transfer of the ammonia molecule from PurQ to PurL. This chain is Phosphoribosylformylglycinamidine synthase subunit PurQ, found in Ruegeria sp. (strain TM1040) (Silicibacter sp.).